Reading from the N-terminus, the 566-residue chain is Cytochrome c oxidase subunit 1 (566 aa).

A run of 7 helical transmembrane segments spans residues 29-49 (IGVL…AFTV), 97-117 (VMIT…ALFG), 141-161 (LSYW…FAPG), 189-209 (LAIF…INMI), 227-247 (LFAW…PVLA), 278-298 (ILWF…FGIV), and 310-330 (IFGY…GFVV). Fe(II)-heme a is bound at residue His102. Positions 284 and 288 each coordinate Cu cation. The 1'-histidyl-3'-tyrosine (His-Tyr) cross-link spans 284-288 (HPEVY). Cu cation-binding residues include His333 and His334. 2 helical membrane-spanning segments follow: residues 348 to 368 (FMMA…SWIA) and 381 to 401 (MLWA…GIVL). Residue His419 coordinates heme a3. The next 3 membrane-spanning stretches (helical) occupy residues 420 to 440 (FHYV…YFWI), 455 to 475 (LHFW…HFLG), and 499 to 519 (LGAF…FYTL). His421 contributes to the Fe(II)-heme a binding site. The disordered stretch occupies residues 543 to 566 (TSPPPEHTFEQLPKREDWERAPAH). The span at 549 to 566 (HTFEQLPKREDWERAPAH) shows a compositional bias: basic and acidic residues.

The protein belongs to the heme-copper respiratory oxidase family. It depends on Cu(2+) as a cofactor. Heme serves as cofactor.

The protein localises to the cell membrane. The catalysed reaction is 4 Fe(II)-[cytochrome c] + O2 + 8 H(+)(in) = 4 Fe(III)-[cytochrome c] + 2 H2O + 4 H(+)(out). It participates in energy metabolism; oxidative phosphorylation. Cytochrome c oxidase is the component of the respiratory chain that catalyzes the reduction of oxygen to water. Subunits 1-3 form the functional core of the enzyme complex. Co I is the catalytic subunit of the enzyme. Electrons originating in cytochrome c are transferred via the copper A center of subunit 2 and heme a of subunit 1 to the bimetallic center formed by heme a3 and copper B. This cytochrome c oxidase shows proton pump activity across the membrane in addition to the electron transfer. The protein is Cytochrome c oxidase subunit 1 (ctaD) of Cereibacter sphaeroides (Rhodobacter sphaeroides).